Here is a 92-residue protein sequence, read N- to C-terminus: Small ribosomal subunit protein uS19c (92 aa).

The protein belongs to the universal ribosomal protein uS19 family.

It is found in the plastid. It localises to the chloroplast. Functionally, protein S19 forms a complex with S13 that binds strongly to the 16S ribosomal RNA. This chain is Small ribosomal subunit protein uS19c, found in Manihot esculenta (Cassava).